Consider the following 765-residue polypeptide: Periplasmic beta-glucosidase (765 aa).

The first 20 residues, 1-20 (MKWLCSVGVAVSLAMQPALA), serve as a signal peptide directing secretion. Residue Asp-287 is part of the active site.

The protein belongs to the glycosyl hydrolase 3 family.

Its subcellular location is the periplasm. The enzyme catalyses Hydrolysis of terminal, non-reducing beta-D-glucosyl residues with release of beta-D-glucose.. This is Periplasmic beta-glucosidase (bglX) from Salmonella typhimurium (strain LT2 / SGSC1412 / ATCC 700720).